Consider the following 381-residue polypeptide: Short-chain dehydrogenase anuD (381 aa).

Residues I84, K109, D133, N158, Y244, and K248 each coordinate NADP(+). Residue Y244 is the Proton acceptor of the active site. The Proton donor role is filled by Y244. The active-site Lowers pKa of active site Tyr is K248.

The protein belongs to the short-chain dehydrogenases/reductases (SDR) family.

Its function is as follows. Highly reducing polyketide synthase; part of the gene cluster that mediates the biosynthesis of annullatin D, an alkylated aromatic polyketide with a fused dihydrobenzofuran lactone ring system that exhibits potent agonistic activities toward the cannabinoid receptors. AnuD does not seem to play a role within the pathway. The annullatin backbone 2-hydroxymethyl-3-pentylphenol is assembled from one acetyl-CoA starter unit and 5 malonyl-CoA elongation units by cooperation of the highly reducing polyketide synthase anuA, the short-chain dehydrogenase anuB and the oxidoreductase anuC, before being hydroxylated at the C-5 alkyl chain by the cytochrome P450 monooxygenase anuE to form (8S)-annullatin E. The prenyltransferase anuH subsequently installs one isoprenyl group at the benzene ring to form (8S)-annullatin J. Enzymatic or nonenzymatic dihydro-benzofuran ring formation between the prenyl and the phenolic hydroxyl groups in (8S)-annullatin J results in two diastereomers (2S,9S)-annullatin H and compound 12. The intermediate (2S,9S)-annullatin H is then converted to (2S,9S)-annullatin D by the FAD-linked oxidoreductase anuG-catalyzed five-member lactone ring formation. The isomer 12 acts as a substrate for the short-chain dehydrogenase anuF and is oxidized to (2R)-annullatin F, which is subsequently acetylated by an acetyltransferase leading to (2R)-annullatin G formation. The remaining enzymes identified within the cluster, anuD, anuI and anuJ, seem not to be involved in annullatin biosynthesis. This is Short-chain dehydrogenase anuD from Penicillium roqueforti (strain FM164).